Consider the following 183-residue polypeptide: Endoribonuclease AbiQ (183 aa).

This sequence belongs to the ToxN/AbiQ toxin family. Forms a triangular heterohexamer with a single 35-nt-long repeat of RNA antitoxin AntiQ.

It localises to the cytoplasm. Functionally, toxic component of a type III toxin-antitoxin (TA) system. An endoribonuclease that is probably sequence-specific. It is neutralized by its cognate antitoxin RNA AntiQ, which has 2.8 35 nucleotide-long repeats. Cannot be cloned in L.lactis subsp. cremoris strain NZ9000 in the absence of the antitoxin gene; expression in strain NZ9000 even in the presence of antiQ inhibits growth in a bacteriostatic fashion. Confers resistance to 936 and c2 phages but not P335 phages in L.lactis, causes an abortive infection (Abi phenotype). Viral DNA is replicated but not cleaved from its concatemeric form, while the viral major structural protein is produced normally in the presence of this protein. Operon expression in E.coli confers resistance to 3 phages of the Myoviridae family (T4, RB69 and phage 2) and 1 of the Siphoviridae family (T5), but not other tested phages (T1, T3, lambda vir, HK97, Mu and pilH alpha). The presence of this operon in L.lactis subsp. lactis strain IL1403 during phage P008 infection alters the viral transcription profiles. In Lactococcus lactis subsp. lactis (Streptococcus lactis), this protein is Endoribonuclease AbiQ.